The chain runs to 459 residues: Cysteine--tRNA ligase (459 aa).

Residue cysteine 28 coordinates Zn(2+). The 'HIGH' region signature appears at 30–40; sequence VTVYDLCHFGH. Zn(2+)-binding residues include cysteine 209, histidine 234, and glutamate 238. The 'KMSKS' region signature appears at 266-270; it reads KMSKS. Lysine 269 contacts ATP.

Belongs to the class-I aminoacyl-tRNA synthetase family. Monomer. The cofactor is Zn(2+).

It is found in the cytoplasm. It carries out the reaction tRNA(Cys) + L-cysteine + ATP = L-cysteinyl-tRNA(Cys) + AMP + diphosphate. The sequence is that of Cysteine--tRNA ligase from Actinobacillus pleuropneumoniae serotype 5b (strain L20).